A 265-amino-acid chain; its full sequence is 3-methyl-2-oxobutanoate hydroxymethyltransferase (265 aa).

Mg(2+) contacts are provided by aspartate 44 and aspartate 83. 3-methyl-2-oxobutanoate-binding positions include 44-45 (DS), aspartate 83, and lysine 113. Residue glutamate 115 coordinates Mg(2+). Catalysis depends on glutamate 183, which acts as the Proton acceptor.

Belongs to the PanB family. As to quaternary structure, homodecamer; pentamer of dimers. It depends on Mg(2+) as a cofactor.

The protein localises to the cytoplasm. The catalysed reaction is 3-methyl-2-oxobutanoate + (6R)-5,10-methylene-5,6,7,8-tetrahydrofolate + H2O = 2-dehydropantoate + (6S)-5,6,7,8-tetrahydrofolate. It functions in the pathway cofactor biosynthesis; (R)-pantothenate biosynthesis; (R)-pantoate from 3-methyl-2-oxobutanoate: step 1/2. Functionally, catalyzes the reversible reaction in which hydroxymethyl group from 5,10-methylenetetrahydrofolate is transferred onto alpha-ketoisovalerate to form ketopantoate. This is 3-methyl-2-oxobutanoate hydroxymethyltransferase from Leptospira borgpetersenii serovar Hardjo-bovis (strain JB197).